The sequence spans 824 residues: Protein-glutamine gamma-glutamyltransferase K (824 aa).

Positions 1-10 (MEGPRSDVGR) are enriched in basic and acidic residues. 2 disordered regions span residues 1-44 (MEGP…GGRS) and 61-110 (DDWG…AAGD). T20 is subject to Phosphothreonine. A phosphoserine mark is found at S22, S70, S92, S100, and S103. Residues 65 to 76 (PEPSGSRSRGTS) are compositionally biased toward low complexity. A compositionally biased stretch (basic and acidic residues) spans 85–100 (GDSRGRDSRGGRRPES). Residues C385, H444, and D467 contribute to the active site. Ca(2+) is bound by residues N507, D509, E556, and E561. A disordered region spans residues 801-824 (RGFSEAVGDSRSGENIPMAFRGGA). Residue S812 is modified to Phosphoserine.

It belongs to the transglutaminase superfamily. Transglutaminase family. Interacts with PLAAT4. Ca(2+) serves as cofactor. In terms of processing, palmitoylated. Post-translationally, the membrane anchorage region possesses a cluster of five cysteines within which fatty acid(s) may become thioester-linked. It is subject to phorbol ester-stimulated phosphorylation and is hypersensitive to proteolysis, which releases the enzyme in a soluble form. Tyrosine-phosphorylated.

Its subcellular location is the membrane. It catalyses the reaction L-glutaminyl-[protein] + L-lysyl-[protein] = [protein]-L-lysyl-N(6)-5-L-glutamyl-[protein] + NH4(+). Functionally, catalyzes the cross-linking of proteins and the conjugation of polyamines to proteins. Responsible for cross-linking epidermal proteins during formation of the stratum corneum. Involved in cell proliferation. This Rattus norvegicus (Rat) protein is Protein-glutamine gamma-glutamyltransferase K (Tgm1).